Reading from the N-terminus, the 660-residue chain is Pro-secreted protein ORF2 (660 aa).

The signal sequence occupies residues 1–19; it reads MRPRPILLLLLMFLPMLPA. Disordered regions lie at residues 18–44 and 64–123; these read PAPP…FWGD and PDVT…PPVP. A Nuclear localization signal motif is present at residues 28-33; it reads RRRGRR. Positions 92-116 are enriched in low complexity; it reads QRPAAASRRRPTTAGAAPLTAVAPA. N-linked (GlcNAc...) asparagine; by host glycosylation is found at Asn-137 and Asn-310. The particle formation stretch occupies residues 368-394; that stretch reads IALTLFNLADTLLGGLPTELISSAGGQ. A glycan (N-linked (GlcNAc...) asparagine; by host) is linked at Asn-562. Positions 585–610 are oligomerization; it reads TTSLGAGPVSISAVAVLAPHSALALL.

It belongs to the hepevirus capsid protein family. In terms of assembly, homodimer. Self-assembles to form the capsid. The capsid is dominated by dimers that define the 30 morphological units. Interacts with phosphorylated protein ORF3. Interacts with host TMEM134. Interacts with host ASGR1 and ASGR2; these interactions facilitate infection of host hepatocytes. Post-translationally, cleaved by host proteases in the N-terminus. In terms of processing, N-glycosylated. Not N-glycosylated. The C-terminus of the capsid protein ORF2 is truncated in non-enveloped virions shedded in feces, probably due to host proteases.

Its subcellular location is the secreted. It is found in the virion. The protein resides in the host cytoplasm. It localises to the host endoplasmic reticulum. The protein localises to the host Golgi apparatus. Its subcellular location is the host cell surface. It is found in the host nucleus. In terms of biological role, plays a role in the inhibition of host antibody-mediated neutralization without blocking viral cell entry. Functionally, forms an icosahedral capsid with a T=1 symmetry and a 34 nm diameter. The capsid is composed of 60 copies linked to each other. Binds to the 5' end of the genomic RNA to mediate genome encapsidation. Binds to heparin surface proteoglycans (HSPGs) to mediate viral entry. Additionally, the interactions with host ASGR1 and ASGR2 facilitate viral infection of hepatocytes. Inhibits IFN production by blocking host TBK1-induced IRF3 phosphorylation. The nuclear form probably modulates host gene expression. In Homo sapiens (Human), this protein is Pro-secreted protein ORF2.